Here is a 719-residue protein sequence, read N- to C-terminus: Photosystem I P700 chlorophyll a apoprotein A1 (719 aa).

8 consecutive transmembrane segments (helical) span residues 60–83 (IFSA…FHGA), 146–169 (LYCT…FHYH), 185–209 (LNHH…HVSL), 281–299 (TAHH…GHMY), 336–359 (WHAQ…HHMY), 375–401 (LSLF…IFMV), 423–445 (AIIS…LYIH), and 521–539 (FLVH…LILL). Positions 563 and 572 each coordinate [4Fe-4S] cluster. The next 2 helical transmembrane spans lie at 579–600 (HVFL…HFSW) and 654–676 (LSAY…MFLF). H665 provides a ligand contact to chlorophyll a'. Chlorophyll a is bound by residues M673 and Y681. Position 682 (W682) interacts with phylloquinone. The helical transmembrane segment at 714–719 (AVGVAH) threads the bilayer.

Belongs to the PsaA/PsaB family. The PsaA/B heterodimer binds the P700 chlorophyll special pair and subsequent electron acceptors. PSI consists of a core antenna complex that captures photons, and an electron transfer chain that converts photonic excitation into a charge separation. The eukaryotic PSI reaction center is composed of at least 11 subunits. P700 is a chlorophyll a/chlorophyll a' dimer, A0 is one or more chlorophyll a, A1 is one or both phylloquinones and FX is a shared 4Fe-4S iron-sulfur center. is required as a cofactor.

It localises to the plastid. The protein resides in the chloroplast thylakoid membrane. It carries out the reaction reduced [plastocyanin] + hnu + oxidized [2Fe-2S]-[ferredoxin] = oxidized [plastocyanin] + reduced [2Fe-2S]-[ferredoxin]. PsaA and PsaB bind P700, the primary electron donor of photosystem I (PSI), as well as the electron acceptors A0, A1 and FX. PSI is a plastocyanin-ferredoxin oxidoreductase, converting photonic excitation into a charge separation, which transfers an electron from the donor P700 chlorophyll pair to the spectroscopically characterized acceptors A0, A1, FX, FA and FB in turn. Oxidized P700 is reduced on the lumenal side of the thylakoid membrane by plastocyanin. This is Photosystem I P700 chlorophyll a apoprotein A1 from Equisetum palustre (Marsh horsetail).